The primary structure comprises 493 residues: Amphoterin-induced protein 1 (493 aa).

Positions 1–27 (MQPQRDLRGLWLLLLSLFLLLFEVARA) are cleaved as a signal peptide. In terms of domain architecture, LRRNT spans 28–61 (GRPVVSCPANCLCASNILSCSKQQLPNVPQSLPG). At 28 to 372 (GRPVVSCPAN…LHGHHDTLNT (345 aa)) the chain is on the extracellular side. 2 cysteine pairs are disulfide-bonded: Cys34–Cys40 and Cys38–Cys47. LRR repeat units lie at residues 62–83 (YTAL…WTPT), 87–108 (NLHS…AFVP), 111–132 (NLRY…LFSG), 135–156 (ALEV…AFED), 159–179 (QLQK…ELIK), and 186–206 (KLTL…TDLQ). An N-linked (GlcNAc...) asparagine glycan is attached at Asn72. The LRRCT domain occupies 221 to 272 (NPLECDCKLYQLFSHWQYRQLSSVMDFQEDLYCVHSKKLHNVFSLDFFNCSE). 3 cysteine pairs are disulfide-bonded: Cys225–Cys253, Cys227–Cys270, and Cys290–Cys341. Residues Asn269, Asn315, Asn349, and Asn360 are each glycosylated (N-linked (GlcNAc...) asparagine). The Ig-like C2-type domain occupies 269–353 (NCSEYKESAW…MGETFNETLS (85 aa)). The helical transmembrane segment at 373–393 (AYTTLVGCILSVVLVLIYLYL) threads the bilayer. At 394–493 (TPCRCWCRGV…SVFSDTPIVV (100 aa)) the chain is on the cytoplasmic side. The disordered stretch occupies residues 405 to 493 (KPSSHQGDSL…SVFSDTPIVV (89 aa)). Residues 408 to 424 (SHQGDSLSSSMLSTTPN) show a composition bias toward polar residues. Residues 431 to 442 (GDKDDGFDRRVA) are compositionally biased toward basic and acidic residues. Phosphoserine is present on residues Ser477 and Ser481.

It belongs to the immunoglobulin superfamily. AMIGO family. In terms of assembly, homodimer, and heterodimer with AMIGO2 and AMIGO3. Interacts with KCNB1.

Its subcellular location is the cell membrane. It localises to the perikaryon. The protein localises to the cell projection. The protein resides in the dendrite. It is found in the axon. Functionally, promotes growth and fasciculation of neurites from cultured hippocampal neurons. May be involved in fasciculation as well as myelination of developing neural axons. May have a role in regeneration as well as neural plasticity in the adult nervous system. May mediate homophilic as well as heterophilic cell-cell interaction and contribute to signal transduction through its intracellular domain. Assembled with KCNB1 modulates the gating characteristics of the delayed rectifier voltage-dependent potassium channel KCNB1. This is Amphoterin-induced protein 1 from Rattus norvegicus (Rat).